A 166-amino-acid chain; its full sequence is Cytochrome c-type biogenesis protein CcmE (166 aa).

Residues 1 to 13 (MNFLPKSRKARRR) are Cytoplasmic-facing. Residues 14–34 (LTILAVAAPVVALAVGLALWG) traverse the membrane as a helical; Signal-anchor for type II membrane protein segment. Residues 35–166 (MRDAISLFYT…QGYKPGKPNT (132 aa)) are Periplasmic-facing. 2 residues coordinate heme: His128 and Tyr132. The tract at residues 143–166 (EQGEWRGDGQAPSYQGYKPGKPNT) is disordered.

Belongs to the CcmE/CycJ family.

Its subcellular location is the cell inner membrane. In terms of biological role, heme chaperone required for the biogenesis of c-type cytochromes. Transiently binds heme delivered by CcmC and transfers the heme to apo-cytochromes in a process facilitated by CcmF and CcmH. The sequence is that of Cytochrome c-type biogenesis protein CcmE from Caulobacter sp. (strain K31).